Reading from the N-terminus, the 130-residue chain is MAQVQYYGTGRRKSSVARVRLVPGDGKIVINNRDWEDYIPFAALREVIKQPLVATETLGNYDVLVNVRGGGYTGQAGAIRHGVARALLQVAPEYRPALKSAGLLTRDSRMKERKKPGLKGARRAPQFSKR.

The segment at 105–130 (TRDSRMKERKKPGLKGARRAPQFSKR) is disordered. Residues 111 to 130 (KERKKPGLKGARRAPQFSKR) show a composition bias toward basic residues.

Belongs to the universal ribosomal protein uS9 family.

This Listeria welshimeri serovar 6b (strain ATCC 35897 / DSM 20650 / CCUG 15529 / CIP 8149 / NCTC 11857 / SLCC 5334 / V8) protein is Small ribosomal subunit protein uS9.